The chain runs to 560 residues: Phosphoglucomutase 1 (560 aa).

Positions 24 and 116 each coordinate alpha-D-glucose 1,6-bisphosphate. S116 functions as the Phosphoserine intermediate in the catalytic mechanism. 4 residues coordinate Mg(2+): S116, D288, D290, and D292. S116 bears the Phosphoserine mark. Alpha-D-glucose 1,6-bisphosphate contacts are provided by D292, R293, T357, E376, S378, and K389.

The protein belongs to the phosphohexose mutase family. As to quaternary structure, monomer. The cofactor is Mg(2+). As to expression, localized primarily to fat bodies in third instar larvae.

It carries out the reaction alpha-D-glucose 1-phosphate = alpha-D-glucose 6-phosphate. The enzyme catalyses O-phospho-L-seryl-[protein] + alpha-D-glucose 1-phosphate = alpha-D-glucose 1,6-bisphosphate + L-seryl-[protein]. It catalyses the reaction alpha-D-glucose 1,6-bisphosphate + L-seryl-[protein] = O-phospho-L-seryl-[protein] + alpha-D-glucose 6-phosphate. Functionally, catalyzes the reversible isomerization of alpha-D-glucose 1-phosphate to alpha-D-glucose 6-phosphate. The mechanism proceeds via the intermediate compound alpha-D-glucose 1,6-bisphosphate. This enzyme participates in both the breakdown and synthesis of glucose. Enzyme of the glycolytic pathway. Glycolysis is essential in glial cells but not in neurons; neurons rely on the citric acid cycle for their energy needs, and on lactate and alanine secreted into the hemolymph by glial cells to fuel it. The sequence is that of Phosphoglucomutase 1 from Drosophila melanogaster (Fruit fly).